Reading from the N-terminus, the 1320-residue chain is MGTTTMGVKLDDATRERIKSAATRIDRTPHWLIKQAIFSYLEQLENSDTLPELPALLSGAANESDEAPTPAEEPHQPFLDFAEQILPQSVSRAAITAAYRRPETEAVSMLLEQARLPQPVAEQAHKLAYQLADKLRNQKNASGRAGMVQGLLQEFSLSSQEGVALMCLAEALLRIPDKATRDALIRDKISNGNWQSHIGRSPSLFVNAATWGLLFTGKLVSTHNEASLSRSLNRIIGKSGEPLIRKGVDMAMRLMGEQFVTGETIAEALANARKLEEKGFRYSYDMLGEAALTAADAQAYMVSYQQAIHAIGKASNGRGIYEGPGISIKLSALHPRYSRAQYDRVMEELYPRLKSLTLLARQYDIGINIDAEESDRLEISLDLLEKLCFEPELAGWNGIGFVIQAYQKRCPLVIDYLIDLATRSRRRLMIRLVKGAYWDSEIKRAQMDGLEGYPVYTRKVYTDVSYLACAKKLLAVPNLIYPQFATHNAHTLAAIYQLAGQNYYPGQYEFQCLHGMGEPLYEQVTGKVADGKLNRPCRIYAPVGTHETLLAYLVRRLLENGANTSFVNRIADTSLPLDELVADPVTAVEKLAQQEGQTGLPHPKIPLPRDLYGHGRDNSAGLDLANEHRLASLSSALLNSALQKWQALPMLEQPVAAGEMSPVINPAEPKDIVGYVREATPREVEQALESAVNNAPIWFATPPAERAAILHRAAVLMESQMQQLIGILVREAGKTFSNAIAEVREAVDFLHYYAGQVRDDFANETHRPLGPVVCISPWNFPLAIFTGQIAAALAAGNSVLAKPAEQTPLIAAQGIAILLEAGVPPGVVQLLPGRGETVGAQLTGDDRVRGVMFTGSTEVATLLQRNIASRLDAQGRPIPLIAETGGMNAMIVDSSALTEQVVVDVLASAFDSAGQRCSALRVLCLQDEIADHTLKMLRGAMAECRMGNPGRLTTDIGPVIDSEAKANIERHIQTMRSKGRPVFQAVRENSEDAREWQSGTFVAPTLIELDDFAELQKEVFGPVLHVVRYNRNQLPELIEQINASGYGLTLGVHTRIDETIAQVTGSAHVGNLYVNRNMVGAVVGVQPFGGEGLSGTGPKAGGPLYLYRLLANRPESALAVTLARQDAKYPVDAQLKAALTQPLNALREWAANRPELQALCTQYGELAQAGTQRLLPGPTGERNTWTLLPRERVLCIADDEQDALTQLAAVLAVGSQVLWPDDALHRQLVKALPSAVSERIQLAKAENITAQPFDAVIFHGDSDQLRALCEAVAARDGTIVSVQGFARGESNILLERLYIERSLSVNTAAAGGNASLMTIG.

Residues 228–574 (LSRSLNRIIG…SFVNRIADTS (347 aa)) form a proline dehydrogenase region. Residues 653-1119 (QPVAAGEMSP…LANRPESALA (467 aa)) are aldehyde dehydrogenase. Active-site residues include glutamate 883 and cysteine 917.

The protein in the N-terminal section; belongs to the proline dehydrogenase family. It in the C-terminal section; belongs to the aldehyde dehydrogenase family. As to quaternary structure, homodimer. FAD serves as cofactor.

The catalysed reaction is L-proline + a quinone = (S)-1-pyrroline-5-carboxylate + a quinol + H(+). The enzyme catalyses L-glutamate 5-semialdehyde + NAD(+) + H2O = L-glutamate + NADH + 2 H(+). It functions in the pathway amino-acid degradation; L-proline degradation into L-glutamate; L-glutamate from L-proline: step 1/2. It participates in amino-acid degradation; L-proline degradation into L-glutamate; L-glutamate from L-proline: step 2/2. Oxidizes proline to glutamate for use as a carbon and nitrogen source and also function as a transcriptional repressor of the put operon. The polypeptide is Bifunctional protein PutA (putA) (Escherichia coli (strain K12)).